The chain runs to 411 residues: Bifunctional protein GlmU (411 aa).

A pyrophosphorylase region spans residues 1-204 (MDAIILCAGK…IGKLHGVELN (204 aa)). Residues 6-9 (LCAG), Gln-74, and Gly-79 contribute to the UTP site. The N-acetyl-alpha-D-glucosamine 1-phosphate site is built by Thr-80, Gly-130, Asn-142, and Asn-158. The tract at residues 205-224 (GYWNDIGHPWDVLSANSHFL) is linker. Positions 225-411 (NKIISKISGK…DELVITKKRN (187 aa)) are N-acetyltransferase. His-308 functions as the Proton acceptor in the catalytic mechanism. Acetyl-CoA contacts are provided by Ala-384 and Lys-401.

This sequence in the N-terminal section; belongs to the N-acetylglucosamine-1-phosphate uridyltransferase family. In the C-terminal section; belongs to the transferase hexapeptide repeat family.

The catalysed reaction is N-acetyl-alpha-D-glucosamine 1-phosphate + UTP + H(+) = UDP-N-acetyl-alpha-D-glucosamine + diphosphate. It catalyses the reaction alpha-D-glucosamine 1-phosphate + acetyl-CoA = N-acetyl-alpha-D-glucosamine 1-phosphate + CoA + H(+). The protein operates within nucleotide-sugar biosynthesis; UDP-N-acetyl-alpha-D-glucosamine biosynthesis; N-acetyl-alpha-D-glucosamine 1-phosphate from alpha-D-glucosamine 6-phosphate (route II): step 2/2. It participates in nucleotide-sugar biosynthesis; UDP-N-acetyl-alpha-D-glucosamine biosynthesis; UDP-N-acetyl-alpha-D-glucosamine from N-acetyl-alpha-D-glucosamine 1-phosphate: step 1/1. Catalyzes the last two sequential reactions in the de novo biosynthetic pathway for UDP-N-acetyl-glucosamine (UDP-GlcNAc). Responsible for the acetylation of GlcN-1-P to GlcNAc-1-P, and for the uridyl transfer from UTP to GlcNAc-1-P, to produce UDP-GlcNAc and pyrophosphate. This chain is Bifunctional protein GlmU, found in Methanococcus maripaludis (strain C5 / ATCC BAA-1333).